A 148-amino-acid chain; its full sequence is Large ribosomal subunit protein bL9 (148 aa).

This sequence belongs to the bacterial ribosomal protein bL9 family.

Binds to the 23S rRNA. This chain is Large ribosomal subunit protein bL9, found in Clostridium beijerinckii (strain ATCC 51743 / NCIMB 8052) (Clostridium acetobutylicum).